A 233-amino-acid chain; its full sequence is 7-cyano-7-deazaguanine synthase (233 aa).

Residue 7-17 (LSGGLDSLVTS) participates in ATP binding. Residues C195, C206, C209, and C212 each contribute to the Zn(2+) site.

The protein belongs to the QueC family. The cofactor is Zn(2+).

It carries out the reaction 7-carboxy-7-deazaguanine + NH4(+) + ATP = 7-cyano-7-deazaguanine + ADP + phosphate + H2O + H(+). The protein operates within purine metabolism; 7-cyano-7-deazaguanine biosynthesis. Its function is as follows. Catalyzes the ATP-dependent conversion of 7-carboxy-7-deazaguanine (CDG) to 7-cyano-7-deazaguanine (preQ(0)). In Methanococcus vannielii (strain ATCC 35089 / DSM 1224 / JCM 13029 / OCM 148 / SB), this protein is 7-cyano-7-deazaguanine synthase.